The chain runs to 212 residues: uncharacterized protein (212 aa).

The N-terminal stretch at 1 to 21 (MRRLTAFGLALLLLASGVARG) is a signal peptide.

It to E.coli YfaT and T.maritima TM0986.

This is an uncharacterized protein from Pseudomonas aeruginosa (strain ATCC 15692 / DSM 22644 / CIP 104116 / JCM 14847 / LMG 12228 / 1C / PRS 101 / PAO1).